Here is a 357-residue protein sequence, read N- to C-terminus: DNA replication and repair protein RecF (357 aa).

30-37 is a binding site for ATP; that stretch reads GANGSGKT.

Belongs to the RecF family.

The protein resides in the cytoplasm. The RecF protein is involved in DNA metabolism; it is required for DNA replication and normal SOS inducibility. RecF binds preferentially to single-stranded, linear DNA. It also seems to bind ATP. The chain is DNA replication and repair protein RecF from Salmonella paratyphi B (strain ATCC BAA-1250 / SPB7).